The chain runs to 298 residues: 4-hydroxy-tetrahydrodipicolinate synthase (298 aa).

Thr51 is a pyruvate binding site. The active-site Proton donor/acceptor is Tyr139. Catalysis depends on Lys167, which acts as the Schiff-base intermediate with substrate. Residue Ile209 coordinates pyruvate.

This sequence belongs to the DapA family. Homotetramer; dimer of dimers.

It localises to the cytoplasm. The enzyme catalyses L-aspartate 4-semialdehyde + pyruvate = (2S,4S)-4-hydroxy-2,3,4,5-tetrahydrodipicolinate + H2O + H(+). Its pathway is amino-acid biosynthesis; L-lysine biosynthesis via DAP pathway; (S)-tetrahydrodipicolinate from L-aspartate: step 3/4. Its function is as follows. Catalyzes the condensation of (S)-aspartate-beta-semialdehyde [(S)-ASA] and pyruvate to 4-hydroxy-tetrahydrodipicolinate (HTPA). The protein is 4-hydroxy-tetrahydrodipicolinate synthase of Haemophilus influenzae (strain 86-028NP).